Here is a 513-residue protein sequence, read N- to C-terminus: tRNA-2-methylthio-N(6)-dimethylallyladenosine synthase (513 aa).

The 119-residue stretch at 67–185 folds into the MTTase N-terminal domain; that stretch reads KTFLIKTYGC…LPEILEEAYL (119 aa). [4Fe-4S] cluster is bound by residues cysteine 76, cysteine 112, cysteine 146, cysteine 222, cysteine 226, and cysteine 229. The 231-residue stretch at 208–438 folds into the Radical SAM core domain; the sequence is REGNIKAWVN…NKKVACYSER (231 aa). One can recognise a TRAM domain in the interval 441–504; it reads QQYEGQTVQV…QFSLNGTFIS (64 aa).

It belongs to the methylthiotransferase family. MiaB subfamily. As to quaternary structure, monomer. It depends on [4Fe-4S] cluster as a cofactor.

It is found in the cytoplasm. The enzyme catalyses N(6)-dimethylallyladenosine(37) in tRNA + (sulfur carrier)-SH + AH2 + 2 S-adenosyl-L-methionine = 2-methylsulfanyl-N(6)-dimethylallyladenosine(37) in tRNA + (sulfur carrier)-H + 5'-deoxyadenosine + L-methionine + A + S-adenosyl-L-homocysteine + 2 H(+). Functionally, catalyzes the methylthiolation of N6-(dimethylallyl)adenosine (i(6)A), leading to the formation of 2-methylthio-N6-(dimethylallyl)adenosine (ms(2)i(6)A) at position 37 in tRNAs that read codons beginning with uridine. This chain is tRNA-2-methylthio-N(6)-dimethylallyladenosine synthase, found in Staphylococcus saprophyticus subsp. saprophyticus (strain ATCC 15305 / DSM 20229 / NCIMB 8711 / NCTC 7292 / S-41).